Consider the following 280-residue polypeptide: Exfoliative toxin A (280 aa).

Positions 1 to 38 (MNNSKIISKVLLSLSLFTVGASAFVIQDELMQKNHAKA) are cleaved as a signal peptide. Catalysis depends on charge relay system residues H110, D158, and S233.

It belongs to the peptidase S1B family. It depends on Ca(2+) as a cofactor.

Has serine protease-like properties and binds to the skin protein profilaggrin. Cleaves substrates after acidic residues. Exfoliative toxins cause impetigous diseases commonly referred as staphylococcal scalded skin syndrome (SSSS). This is Exfoliative toxin A (eta) from Staphylococcus aureus.